The following is a 1887-amino-acid chain: Fatty acid synthase subunit alpha (1887 aa).

Residue Lys37 forms a Glycyl lysine isopeptide (Lys-Gly) (interchain with G-Cter in ubiquitin) linkage. Phosphoserine is present on Ser50. Residues 96–120 (ELAAKEEPAKEEAPAPTPAASAPAP) form a disordered region. Over residues 98 to 108 (AAKEEPAKEEA) the composition is skewed to basic and acidic residues. Residues 145-220 (VKASLLLHVL…ETFQDTFSGA (76 aa)) form the Carrier domain. O-(pantetheine 4'-phosphoryl)serine is present on Ser180. At Ser523 the chain carries Phosphoserine. Positions 675–874 (DKYVLITGAG…CGAIIGWTRG (200 aa)) are beta-ketoacyl reductase. Phosphoserine is present on Ser958. The region spanning 1123–1657 (QEVIVEEDLE…QKGGQAIVVH (535 aa)) is the Ketosynthase family 3 (KS3) domain. The active-site For beta-ketoacyl synthase activity is Cys1305. Residue Ser1440 is modified to Phosphoserine. Catalysis depends on for beta-ketoacyl synthase activity residues His1542 and His1583. Positions 1772, 1773, and 1774 each coordinate Mg(2+). Acetyl-CoA is bound by residues 1772-1774 (DVE), Tyr1798, Ser1808, 1817-1827 (EAVFKSLGVKS), 1841-1844 (RVNK), and 1871-1873 (ISH). Mg(2+)-binding residues include Ser1872 and His1873.

Belongs to the thiolase-like superfamily. Fungal fatty acid synthetase subunit alpha family. [Alpha(6)beta(6)] hexamers of two multifunctional subunits (alpha and beta). In terms of processing, 4'-phosphopantetheine is transferred from CoA to a specific serine of the Acyl carrier domain by the C-terminal PPT domain. This modification is essential for activity because fatty acids are bound in thioester linkage to the sulfhydryl of the prosthetic group.

It catalyses the reaction acetyl-CoA + n malonyl-CoA + 2n NADPH + 4n H(+) = a long-chain-acyl-CoA + n CoA + n CO2 + 2n NADP(+).. It carries out the reaction a fatty acyl-[ACP] + malonyl-[ACP] + H(+) = a 3-oxoacyl-[ACP] + holo-[ACP] + CO2. The enzyme catalyses a (3R)-hydroxyacyl-[ACP] + NADP(+) = a 3-oxoacyl-[ACP] + NADPH + H(+). With respect to regulation, inhibited by cerulenin by covalent binding to active site of the ketoacyl synthase (KS) region. Fatty acid synthetase catalyzes the formation of long-chain fatty acids from acetyl-CoA, malonyl-CoA and NADPH. The alpha subunit contains domains for: acyl carrier protein, 3-oxoacyl-[acyl-carrier-protein] reductase, and 3-oxoacyl-[acyl-carrier-protein] synthase. This subunit coordinates the binding of the six beta subunits to the enzyme complex. The polypeptide is Fatty acid synthase subunit alpha (FAS2) (Saccharomyces cerevisiae (strain ATCC 204508 / S288c) (Baker's yeast)).